A 241-amino-acid chain; its full sequence is Deoxyribose-phosphate aldolase (241 aa).

Asp95 acts as the Proton donor/acceptor in catalysis. Lys159 acts as the Schiff-base intermediate with acetaldehyde in catalysis. Catalysis depends on Lys188, which acts as the Proton donor/acceptor.

It belongs to the DeoC/FbaB aldolase family. DeoC type 1 subfamily.

The protein localises to the cytoplasm. The catalysed reaction is 2-deoxy-D-ribose 5-phosphate = D-glyceraldehyde 3-phosphate + acetaldehyde. The protein operates within carbohydrate degradation; 2-deoxy-D-ribose 1-phosphate degradation; D-glyceraldehyde 3-phosphate and acetaldehyde from 2-deoxy-alpha-D-ribose 1-phosphate: step 2/2. Functionally, catalyzes a reversible aldol reaction between acetaldehyde and D-glyceraldehyde 3-phosphate to generate 2-deoxy-D-ribose 5-phosphate. The chain is Deoxyribose-phosphate aldolase from Rhodopirellula baltica (strain DSM 10527 / NCIMB 13988 / SH1).